The following is a 504-amino-acid chain: Procardosin-A (504 aa).

Residues 1-24 (MGTSIKANVLALFLFYLLSPTVFS) form the signal peptide. A propeptide spanning residues 25-68 (VSDDGLIRIGLKKRKVDRIDQLRGRRALMEGNARKDFGFRGTVR) is cleaved from the precursor. One can recognise a Peptidase A1 domain in the interval 85-501 (YFGEIGIGTP…DYGNLLVGFA (417 aa)). The active site involves Asp103. Cys116 and Cys122 are disulfide-bonded. Asn139 carries N-linked (GlcNAc...) asparagine glycosylation. The RGD motif signature appears at 246–248 (RGD). The cysteines at positions 277 and 281 are disulfide-linked. The active site involves Asp286. The propeptide at 310-414 (GVMNQQCKTV…YANELCEHLS (105 aa)) is plant-specific insert. Positions 311 to 416 (VMNQQCKTVV…NELCEHLSTS (106 aa)) constitute a Saposin B-type domain. Cystine bridges form between Cys316/Cys410, Cys341/Cys382, Cys347/Cys379, and Cys424/Cys461. N-linked (GlcNAc...) asparagine glycosylation occurs at Asn432. Positions 455-457 (KGE) match the KGE motif motif.

This sequence belongs to the peptidase A1 family. As to quaternary structure, heterodimer of a light chain and a heavy chain. An intermediate form (35 kDa and 30 kDa subunits) is produced first, and undergoes proteolytic processing to remove the internal plant-specific insert (PSI) and the propeptide. There is some heterogeniety at the cleavage site. Interacts (via RGD or KGE motifs) with PLD1 (via C2 domain). Post-translationally, N-glycosylated. Glycans found at Asn-139 include approximately 6% oligomannose, 82% oligosaccharides of the plant modified type with proximal fucose but without xylose and 6% oligosaccharides of the plant modified type with proximal fucose and xylose. Glycans found at Asn-432 include 14% oligosaccharides of the plant modified type with proximal fucose but without xylose and 86% oligosaccharides of the plant modified type with proximal fucose and xylose. Detected only in pistils, not in seeds, roots, midribs, bracts, stamens, pollen, vascular or supporting tissues. Detected in seeds. High amounts are detected in the broad outer region of the upper portion of the stigma, towards the lower portion of the stigma it accumulates at the periphery. Within the stigma, expressed mainly in the epidermic papillae, lower levels are found in the cortical parenchyma. Present mainly in epidermal cells within the stye (at protein level). Expressed in young flower buds, and at lower levels in seeds, pollen and bracteas, but not in roots or leaves.

The protein localises to the microsome membrane. The protein resides in the protein storage vacuole. Its subcellular location is the secreted. It localises to the cell wall. It is found in the extracellular space. The protein localises to the extracellular matrix. With respect to regulation, inhibited by the specific aspartic proteinase inhibitors diazoacetyl-noleucine methyl ester and pepstatin. Aspartic proteinase with a high preference for bonds between hydrophobic residues. Cleaves alpha-lactalbumin but not beta-lactoglobulin. In Cynara cardunculus (Cardoon), this protein is Procardosin-A.